A 152-amino-acid chain; its full sequence is uncharacterized protein (152 aa).

Belongs to the transposase 8 family.

This is an uncharacterized protein from Sinorhizobium fredii (strain NBRC 101917 / NGR234).